The primary structure comprises 167 residues: MRQTIKYEFWVGLFLLLGIGALVFLGLRVANVQGFAETKSYTVTATFDNIGGLKVRAPLKIGGVVIGRVSAITLDEKSYLPKVSIAINQEYNEIPENSSLSIKTSGLLGEQYIALTMGFDDGDTAMLKNGSQIQDTTSAMVLEDLIGQFLYGSKKSDGNEKSESTEQ.

The Cytoplasmic segment spans residues methionine 1–lysine 6. Residues tyrosine 7–leucine 27 form a helical; Signal-anchor for type II membrane protein membrane-spanning segment. Topologically, residues arginine 28–glutamine 167 are periplasmic. The MCE/MlaD stretch occupies residues serine 40–glycine 118.

The protein belongs to the MlaD family. The complex is composed of two ATP-binding proteins (MlaF), two transmembrane proteins (MlaE), two cytoplasmic solute-binding proteins (MlaB) and six periplasmic solute-binding proteins (MlaD).

The protein resides in the cell inner membrane. Part of the ABC transporter complex MlaFEDB, which is involved in a phospholipid transport pathway that maintains lipid asymmetry in the outer membrane by retrograde trafficking of phospholipids from the outer membrane to the inner membrane. MlaD functions in substrate binding with strong affinity for phospholipids and modulates ATP hydrolytic activity of the complex. In Haemophilus influenzae (strain ATCC 51907 / DSM 11121 / KW20 / Rd), this protein is Intermembrane phospholipid transport system binding protein MlaD.